The following is a 104-amino-acid chain: Large ribosomal subunit protein uL24 (104 aa).

It belongs to the universal ribosomal protein uL24 family. As to quaternary structure, part of the 50S ribosomal subunit.

One of two assembly initiator proteins, it binds directly to the 5'-end of the 23S rRNA, where it nucleates assembly of the 50S subunit. In terms of biological role, one of the proteins that surrounds the polypeptide exit tunnel on the outside of the subunit. This is Large ribosomal subunit protein uL24 from Bradyrhizobium sp. (strain ORS 278).